The chain runs to 592 residues: Syntaxin-binding protein 3 (592 aa).

The segment at 1 to 255 is mediates interaction with DOC2B; that stretch reads MAPPVSERGL…STVLHELTFQ (255 aa).

Belongs to the STXBP/unc-18/SEC1 family. Interacts with STX4. Interacts with DOC2B; the interaction is direct, occurs at the cell membrane, excludes interaction with STX4 and regulates glucose-stimulated insulin secretion. In terms of processing, phosphorylated by PKC in platelets in response to thrombin stimulation; phosphorylation inhibits binding to STX4. In terms of tissue distribution, ubiquitously expressed in all tissues tested.

Its subcellular location is the cytoplasm. It is found in the cytosol. The protein localises to the cell membrane. In terms of biological role, together with STX4 and VAMP2, may play a role in insulin-dependent movement of GLUT4 and in docking/fusion of intracellular GLUT4-containing vesicles with the cell surface in adipocytes. The polypeptide is Syntaxin-binding protein 3 (Stxbp3) (Mus musculus (Mouse)).